Consider the following 509-residue polypeptide: ATP synthase subunit alpha (509 aa).

169 to 176 (GDRQTGKT) provides a ligand contact to ATP.

It belongs to the ATPase alpha/beta chains family. In terms of assembly, F-type ATPases have 2 components, CF(1) - the catalytic core - and CF(0) - the membrane proton channel. CF(1) has five subunits: alpha(3), beta(3), gamma(1), delta(1), epsilon(1). CF(0) has three main subunits: a(1), b(2) and c(9-12). The alpha and beta chains form an alternating ring which encloses part of the gamma chain. CF(1) is attached to CF(0) by a central stalk formed by the gamma and epsilon chains, while a peripheral stalk is formed by the delta and b chains.

Its subcellular location is the cell inner membrane. The enzyme catalyses ATP + H2O + 4 H(+)(in) = ADP + phosphate + 5 H(+)(out). Produces ATP from ADP in the presence of a proton gradient across the membrane. The alpha chain is a regulatory subunit. The polypeptide is ATP synthase subunit alpha (Sinorhizobium fredii (strain NBRC 101917 / NGR234)).